Consider the following 132-residue polypeptide: Large ribosomal subunit protein uL14 (132 aa).

Belongs to the universal ribosomal protein uL14 family. In terms of assembly, part of the 50S ribosomal subunit. Forms a cluster with proteins L3 and L24e, part of which may contact the 16S rRNA in 2 intersubunit bridges.

In terms of biological role, binds to 23S rRNA. Forms part of two intersubunit bridges in the 70S ribosome. The sequence is that of Large ribosomal subunit protein uL14 from Thermoplasma volcanium (strain ATCC 51530 / DSM 4299 / JCM 9571 / NBRC 15438 / GSS1).